A 581-amino-acid polypeptide reads, in one-letter code: Threonine--tRNA ligase (581 aa).

The tract at residues 185–478 is catalytic; sequence DHRKLGKELD…LVEHYGGAFP (294 aa). Positions 278, 329, and 455 each coordinate Zn(2+).

The protein belongs to the class-II aminoacyl-tRNA synthetase family. As to quaternary structure, homodimer. The cofactor is Zn(2+).

It localises to the cytoplasm. It catalyses the reaction tRNA(Thr) + L-threonine + ATP = L-threonyl-tRNA(Thr) + AMP + diphosphate + H(+). Catalyzes the attachment of threonine to tRNA(Thr) in a two-step reaction: L-threonine is first activated by ATP to form Thr-AMP and then transferred to the acceptor end of tRNA(Thr). Also edits incorrectly charged L-seryl-tRNA(Thr). This is Threonine--tRNA ligase from Borreliella burgdorferi (strain ATCC 35210 / DSM 4680 / CIP 102532 / B31) (Borrelia burgdorferi).